Reading from the N-terminus, the 161-residue chain is Nucleotide-binding protein AZOSEA28950 (161 aa).

Belongs to the YajQ family.

Nucleotide-binding protein. The sequence is that of Nucleotide-binding protein AZOSEA28950 from Aromatoleum aromaticum (strain DSM 19018 / LMG 30748 / EbN1) (Azoarcus sp. (strain EbN1)).